Consider the following 228-residue polypeptide: Aspartyl protease inhibitor (228 aa).

An N-terminal signal peptide occupies residues 1–15 (MKLIELCVLCAIAFA). Positions 88 to 112 (KLKSRMSGKKEEKAAVTSTKDEDLP) are enriched in basic and acidic residues. Residues 88–119 (KLKSRMSGKKEEKAAVTSTKDEDLPKPPQKPS) are disordered. Cys-134 and Cys-224 form a disulfide bridge.

The protein belongs to the protease inhibitor I33 family.

The protein localises to the secreted. Aspartyl protease inhibitor. This is Aspartyl protease inhibitor from Trichostrongylus colubriformis (Black scour worm).